The sequence spans 363 residues: Cytochrome b (363 aa).

4 consecutive transmembrane segments (helical) span residues 23 to 43 (VGFI…LLTF), 67 to 89 (WFVR…IHII), 102 to 122 (SWYS…TGYV), and 164 to 184 (FFIL…LHLY). 2 residues coordinate heme b: His-73 and His-87. Residues His-168 and His-182 each coordinate heme b. Residue His-187 coordinates a ubiquinone. 4 helical membrane passes run 210 to 230 (ILFS…PQVG), 271 to 291 (VFPT…LLII), 309 to 329 (RVWT…GCIG), and 332 to 352 (VINL…TTFV).

Belongs to the cytochrome b family. As to quaternary structure, the main subunits of complex b-c1 are: cytochrome b, cytochrome c1 and the Rieske protein. The cofactor is heme b.

Its subcellular location is the mitochondrion inner membrane. Functionally, component of the ubiquinol-cytochrome c reductase complex (complex III or cytochrome b-c1 complex) that is part of the mitochondrial respiratory chain. The b-c1 complex mediates electron transfer from ubiquinol to cytochrome c. Contributes to the generation of a proton gradient across the mitochondrial membrane that is then used for ATP synthesis. The protein is Cytochrome b (MT-CYB) of Theileria parva (East coast fever infection agent).